A 241-amino-acid polypeptide reads, in one-letter code: Ribulose-phosphate 3-epimerase 2 (241 aa).

Ser-21 provides a ligand contact to substrate. A divalent metal cation-binding residues include His-46, Asp-48, and His-79. The active-site Proton acceptor is the Asp-48. Substrate-binding positions include His-79, 155–158 (GFGG), 192–194 (DGG), and 214–215 (GS). Asp-192 contacts a divalent metal cation. The Proton donor role is filled by Asp-192.

The protein belongs to the ribulose-phosphate 3-epimerase family. A divalent metal cation is required as a cofactor.

The enzyme catalyses D-ribulose 5-phosphate = D-xylulose 5-phosphate. It functions in the pathway carbohydrate degradation. Its function is as follows. Catalyzes the reversible epimerization of D-ribulose 5-phosphate to D-xylulose 5-phosphate. This is Ribulose-phosphate 3-epimerase 2 from Cupriavidus necator (strain ATCC 17699 / DSM 428 / KCTC 22496 / NCIMB 10442 / H16 / Stanier 337) (Ralstonia eutropha).